The sequence spans 360 residues: MLTLSDFDFDLPPELIAQTALPERSASRLLEVDNTNPSAPPRLVDRRFAELPACVAPGDLLVFNDTKVLKARFFGRKASGGKIEVLIERVTGERTALAQIRASKSPPPGTTLTLADAFDVTVGERVEPFFTLHFPDDCLVLIERHGRLPLPPYIEHAPDAADETRYQTVFAANPGAVAAPTAGLHFDDAVLAALEARGVERATLTLHVGAGTFQPVRVENLAEHRMHSESYELTDALVEKIAATRARGGRVIAVGTTSMRALEAAARDAQAAGRPLAATRAETDIFITPGYRFRVVDRLVTNFHLPKSTLLMLVSAFAGIETIRAAYRHAIDARYRFFSYGDAMLLTRRDDAAEATHGGA.

This sequence belongs to the QueA family. As to quaternary structure, monomer.

It is found in the cytoplasm. It carries out the reaction 7-aminomethyl-7-carbaguanosine(34) in tRNA + S-adenosyl-L-methionine = epoxyqueuosine(34) in tRNA + adenine + L-methionine + 2 H(+). It functions in the pathway tRNA modification; tRNA-queuosine biosynthesis. Its function is as follows. Transfers and isomerizes the ribose moiety from AdoMet to the 7-aminomethyl group of 7-deazaguanine (preQ1-tRNA) to give epoxyqueuosine (oQ-tRNA). The sequence is that of S-adenosylmethionine:tRNA ribosyltransferase-isomerase from Burkholderia pseudomallei (strain 1106a).